The following is a 511-amino-acid chain: Potassium voltage-gated channel subfamily A member 10 (511 aa).

A disordered region spans residues E25–S44. A helical membrane pass occupies residues V218–L238. The helical transmembrane segment at F271–V292 threads the bilayer. The S-palmitoyl cysteine moiety is linked to residue C293. The helical transmembrane segment at I303–L323 threads the bilayer. The chain crosses the membrane as a helical; Voltage-sensor span at residues I339–S358. A helical transmembrane segment spans residues L375–F395. Positions T421–D426 match the Selectivity filter motif. Residues I436–I456 traverse the membrane as a helical segment. The interval S489–K511 is disordered.

Belongs to the potassium channel family. A (Shaker) (TC 1.A.1.2) subfamily. Kv1.8/KCNA10 sub-subfamily. Homotetramer. Interacts with KCN4B/POMP. Interaction with KCN4B/POMP is necessary for the modulation of channel activity by cAMP. As to expression, expressed strongly in the inner ear and weakly in skeletal muscle. Not detected in other tissues.

Its subcellular location is the membrane. The enzyme catalyses K(+)(in) = K(+)(out). With respect to regulation, the channel activity is up-regulated by cAMP. Voltage-gated potassium ion channel that mediates K(+) permeability of excitable membranes. When opened in response to the voltage difference across the membrane, KCNA10 channel selectively allows the flow of potassium ions across the membrane down their electrochemical gradient. In Mus musculus (Mouse), this protein is Potassium voltage-gated channel subfamily A member 10.